The sequence spans 545 residues: Methionine--tRNA ligase (545 aa).

Residues 15–25 (PYANGPIHIGH) carry the 'HIGH' region motif. Zn(2+) contacts are provided by Cys-146, Cys-149, Cys-159, and Cys-162. Residues 332 to 336 (KLSKS) carry the 'KMSKS' region motif. An ATP-binding site is contributed by Lys-335.

This sequence belongs to the class-I aminoacyl-tRNA synthetase family. MetG type 1 subfamily. Monomer. It depends on Zn(2+) as a cofactor.

It is found in the cytoplasm. The enzyme catalyses tRNA(Met) + L-methionine + ATP = L-methionyl-tRNA(Met) + AMP + diphosphate. Functionally, is required not only for elongation of protein synthesis but also for the initiation of all mRNA translation through initiator tRNA(fMet) aminoacylation. This is Methionine--tRNA ligase (metG) from Buchnera aphidicola subsp. Schizaphis graminum (strain Sg).